The chain runs to 330 residues: NADH-quinone oxidoreductase subunit H (330 aa).

8 helical membrane-spanning segments follow: residues 3-23 (AAFV…FSAL), 76-96 (PVFM…MAAI), 118-138 (VGLL…LLAG), 161-181 (EVVT…ISLV), 188-208 (AGGM…LFLI), 244-264 (FFIG…LIFL), 272-292 (FIPG…LFLW), and 307-327 (WLCW…TGIV).

Belongs to the complex I subunit 1 family. NDH-1 is composed of 14 different subunits. Subunits NuoA, H, J, K, L, M, N constitute the membrane sector of the complex.

The protein resides in the cell inner membrane. The enzyme catalyses a quinone + NADH + 5 H(+)(in) = a quinol + NAD(+) + 4 H(+)(out). NDH-1 shuttles electrons from NADH, via FMN and iron-sulfur (Fe-S) centers, to quinones in the respiratory chain. The immediate electron acceptor for the enzyme in this species is believed to be ubiquinone. Couples the redox reaction to proton translocation (for every two electrons transferred, four hydrogen ions are translocated across the cytoplasmic membrane), and thus conserves the redox energy in a proton gradient. This subunit may bind ubiquinone. This chain is NADH-quinone oxidoreductase subunit H, found in Nitratiruptor sp. (strain SB155-2).